Consider the following 192-residue polypeptide: Nucleotidase CA_C3379 (192 aa).

This sequence belongs to the 5'(3')-deoxyribonucleotidase family. The cofactor is Mg(2+).

The catalysed reaction is sugar phosphate + H2O = sugar + phosphate.. In terms of biological role, catalyzes the dephosphorylation of nucleotide monophosphates and of different sugar phosphates in vitro. This is Nucleotidase CA_C3379 from Clostridium acetobutylicum (strain ATCC 824 / DSM 792 / JCM 1419 / IAM 19013 / LMG 5710 / NBRC 13948 / NRRL B-527 / VKM B-1787 / 2291 / W).